A 141-amino-acid chain; its full sequence is Nucleoside diphosphate kinase (141 aa).

Positions 11, 59, 87, 93, 104, and 114 each coordinate ATP. Histidine 117 functions as the Pros-phosphohistidine intermediate in the catalytic mechanism.

It belongs to the NDK family. In terms of assembly, homotetramer. It depends on Mg(2+) as a cofactor.

It is found in the cytoplasm. It catalyses the reaction a 2'-deoxyribonucleoside 5'-diphosphate + ATP = a 2'-deoxyribonucleoside 5'-triphosphate + ADP. The catalysed reaction is a ribonucleoside 5'-diphosphate + ATP = a ribonucleoside 5'-triphosphate + ADP. Its function is as follows. Major role in the synthesis of nucleoside triphosphates other than ATP. The ATP gamma phosphate is transferred to the NDP beta phosphate via a ping-pong mechanism, using a phosphorylated active-site intermediate. This is Nucleoside diphosphate kinase from Herminiimonas arsenicoxydans.